Here is a 133-residue protein sequence, read N- to C-terminus: MGLENLKPAKGSVKKIKRVGRGQGSGMGKTATRGGKGQTARTGYKAKRGFEGGQQPLQRRLPKIGFRTKDSHIYSINVEKNGAIKDLEEITFSSLRALHHFPLYIEGVKLIGKDAKNLASKIKDERIKTSGQK.

The segment at 1–64 (MGLENLKPAK…QPLQRRLPKI (64 aa)) is disordered.

It belongs to the universal ribosomal protein uL15 family. In terms of assembly, part of the 50S ribosomal subunit.

In terms of biological role, binds to the 23S rRNA. In Helicobacter pylori (strain Shi470), this protein is Large ribosomal subunit protein uL15.